An 81-amino-acid polypeptide reads, in one-letter code: Costars family protein ABRACL (81 aa).

Met1 is subject to N-acetylmethionine.

It belongs to the costars family.

The protein is Costars family protein ABRACL (ABRACL) of Bos taurus (Bovine).